The chain runs to 78 residues: Large ribosomal subunit protein bL28 (78 aa).

A disordered region spans residues 1 to 24 (MSQVCQVTGKRPVTGNNVSHSQRK).

This sequence belongs to the bacterial ribosomal protein bL28 family.

This chain is Large ribosomal subunit protein bL28, found in Chromohalobacter salexigens (strain ATCC BAA-138 / DSM 3043 / CIP 106854 / NCIMB 13768 / 1H11).